We begin with the raw amino-acid sequence, 447 residues long: Interferon-induced protein 44-like (447 aa).

The 159-residue stretch at 1–159 (MKVTARLTWI…PVECEIFRVD (159 aa)) folds into the TLDc domain.

The protein belongs to the IFI44 family. As to quaternary structure, HA-28 antigen forms a complex with Kb MHC in BALB.B donor cells. Interacts with FKBP5; this interaction modulates IKBKB and IKBKE kinase activities. As to expression, expressed on cells of the hematopoietic lineage. Detected in transformed cell lines of the macrophage and B-cell lineage. Expressed in spleen and bone marrow.

Its subcellular location is the cytoplasm. Its function is as follows. Type I interferon-stimulated gene (ISG) that plays a critical role in antiviral and antibacterial activity. During bacterial infection, promotes macrophage differentiation and facilitates inflammatory cytokine secretion. Plays a role in the control of respiratory syncycial virus/RSV infection, reducing the ability of the virus to replicate. Acts as a feedback regulator of IFN responses by negatively regulating IKBKB kinase activity through interaction with FKBP5. Functionally, precursor of the histocompatibility antigen HA-28 in BALB.B mice. More generally, minor histocompatibility antigens refer to immunogenic peptide which, when complexed with MHC, can generate an immune response after recognition by specific T-cells. The peptides are derived from polymorphic intracellular proteins, which are cleaved by normal pathways of antigen processing. The binding of these peptides to MHC molecules and its expression on the cell surface can stimulate T-cell responses and thereby trigger graft rejection or graft-versus-host disease (GVHD). More specifically, HA-28 minor antigen is transcribed in the BALB.B donor but not in host C57BL/6 cells. HA-28 is presented to the donor BALB.B cell surface by Kb MHC. This complex HA-28/Kb MHC elicits cytotoxic T-cell response in C57BL/6 mice immunized with BALB.B spleen cells. It induces C57BL/6 mice cells recognition and lysis by CD8 T-cell from BALB.B mice. This is Interferon-induced protein 44-like (Ifi44l) from Mus musculus (Mouse).